Here is a 184-residue protein sequence, read N- to C-terminus: Large ribosomal subunit protein bL9 (184 aa).

The disordered stretch occupies residues 160–184; that stretch reads LQNQKSEQQEAEQDANKEAADGDDS. Residues 173–184 are compositionally biased toward basic and acidic residues; sequence DANKEAADGDDS.

Belongs to the bacterial ribosomal protein bL9 family.

Its function is as follows. Binds to the 23S rRNA. In Wolbachia sp. subsp. Drosophila simulans (strain wRi), this protein is Large ribosomal subunit protein bL9.